The chain runs to 312 residues: MSTARKHTALPKAQILIEALPWLTRHHGRTVVIKFGGNAMIDEELKAAFAQDVVFLRHAGLKPVVVHGGGPQISAQLDKQGLVSEFKAGLRVTTPEAMDVVRMVLAGQVQRELVGLLNQHGPLAVGLTGEDAHTITAVQHRPTIDGELVDIGRVGEITAIDTGAIQALLDDGRIPVVSSIARSADDHHVYNVNADTAAAALAAALNAETLMVLTDVEGLYEDWPNSDDVISRLTASQLEKLLPELSSGMVPKMQGCLHAVRNGVETARVIDGRVQHSILLEIFTDEGIGTMVVPDAPIDVHAARTAHEQGAS.

Substrate contacts are provided by residues 69–70 (GG), Arg91, and Asn191.

Belongs to the acetylglutamate kinase family. ArgB subfamily.

The protein localises to the cytoplasm. The catalysed reaction is N-acetyl-L-glutamate + ATP = N-acetyl-L-glutamyl 5-phosphate + ADP. It functions in the pathway amino-acid biosynthesis; L-arginine biosynthesis; N(2)-acetyl-L-ornithine from L-glutamate: step 2/4. Catalyzes the ATP-dependent phosphorylation of N-acetyl-L-glutamate. The polypeptide is Acetylglutamate kinase (Streptomyces griseus subsp. griseus (strain JCM 4626 / CBS 651.72 / NBRC 13350 / KCC S-0626 / ISP 5235)).